Reading from the N-terminus, the 548-residue chain is Protein NRT1/ PTR FAMILY 2.4 (548 aa).

12 helical membrane-spanning segments follow: residues 29–49, 65–85, 88–108, 136–156, 172–192, 200–220, 316–336, 354–374, 393–413, 429–449, 468–488, and 508–528; these read TLLG…VFLI, IVNG…DSFF, IPVI…LTLI, ILYA…FILA, FFNW…TAIV, WKLG…IFVA, LVPL…QMSM, VSAG…IILN, LQKV…SAVV, VLWL…HFPA, SLTS…IDVI, and YLVL…CSWF.

This sequence belongs to the major facilitator superfamily. Proton-dependent oligopeptide transporter (POT/PTR) (TC 2.A.17) family. In terms of tissue distribution, strongly expressed in the root stele.

Its subcellular location is the membrane. Functionally, transporter involved in a passive nitrate efflux. The sequence is that of Protein NRT1/ PTR FAMILY 2.4 (NPF2.4) from Arabidopsis thaliana (Mouse-ear cress).